The following is a 206-amino-acid chain: N-(5'-phosphoribosyl)anthranilate isomerase (206 aa).

Belongs to the TrpF family.

The enzyme catalyses N-(5-phospho-beta-D-ribosyl)anthranilate = 1-(2-carboxyphenylamino)-1-deoxy-D-ribulose 5-phosphate. Its pathway is amino-acid biosynthesis; L-tryptophan biosynthesis; L-tryptophan from chorismate: step 3/5. The protein is N-(5'-phosphoribosyl)anthranilate isomerase of Rubrobacter xylanophilus (strain DSM 9941 / JCM 11954 / NBRC 16129 / PRD-1).